The following is a 256-amino-acid chain: Small ribosomal subunit protein eS1 (256 aa).

Positions 1-18 (MAVGKNKRLSKGKKGLKK) are enriched in basic residues. A disordered region spans residues 1–20 (MAVGKNKRLSKGKKGLKKKA). The residue at position 2 (alanine 2) is an N-acetylalanine; partial.

Belongs to the eukaryotic ribosomal protein eS1 family. In terms of assembly, component of the small ribosomal subunit. Mature ribosomes consist of a small (40S) and a large (60S) subunit. The 40S subunit contains about 33 different proteins and 1 molecule of RNA (18S). The 60S subunit contains about 49 different proteins and 3 molecules of RNA (25S, 5.8S and 5S).

Its subcellular location is the cytoplasm. This is Small ribosomal subunit protein eS1 from Chaetomium globosum (strain ATCC 6205 / CBS 148.51 / DSM 1962 / NBRC 6347 / NRRL 1970) (Soil fungus).